A 120-amino-acid polypeptide reads, in one-letter code: Glycine cleavage system H protein (120 aa).

The Lipoyl-binding domain occupies Val-17–Lys-99. Lys-58 carries the N6-lipoyllysine modification.

Belongs to the GcvH family. In terms of assembly, the glycine cleavage system is composed of four proteins: P, T, L and H. (R)-lipoate serves as cofactor.

Functionally, the glycine cleavage system catalyzes the degradation of glycine. The H protein shuttles the methylamine group of glycine from the P protein to the T protein. The protein is Glycine cleavage system H protein of Rhizobium leguminosarum bv. trifolii (strain WSM2304).